The chain runs to 211 residues: Glycerol-3-phosphate acyltransferase (211 aa).

5 helical membrane-spanning segments follow: residues 10–30 (FTTWLIFLISYLIGSIPFGLL), 63–83 (ALTLLCDILKGTLVILVIKFL), 90–110 (NIFISLAGFFAFLGHLFPVWL), 126–146 (LGLYWPAAIVFITAWIVLFLI), and 152–172 (LSALIAVIITPIFVHFSYPYL).

This sequence belongs to the PlsY family. As to quaternary structure, probably interacts with PlsX.

The protein resides in the cell inner membrane. It carries out the reaction an acyl phosphate + sn-glycerol 3-phosphate = a 1-acyl-sn-glycero-3-phosphate + phosphate. It participates in lipid metabolism; phospholipid metabolism. In terms of biological role, catalyzes the transfer of an acyl group from acyl-phosphate (acyl-PO(4)) to glycerol-3-phosphate (G3P) to form lysophosphatidic acid (LPA). This enzyme utilizes acyl-phosphate as fatty acyl donor, but not acyl-CoA or acyl-ACP. This is Glycerol-3-phosphate acyltransferase from Bartonella henselae (strain ATCC 49882 / DSM 28221 / CCUG 30454 / Houston 1) (Rochalimaea henselae).